The primary structure comprises 466 residues: Mitochondrial-processing peptidase subunit beta (466 aa).

Position 73 (histidine 73) interacts with Zn(2+). Glutamate 76 serves as the catalytic Proton acceptor. The Zn(2+) site is built by histidine 77 and glutamate 153.

This sequence belongs to the peptidase M16 family. As to quaternary structure, heterodimer of mppA (alpha) and mppB (beta) subunits, forming the mitochondrial processing protease (MPP) in which mppA is involved in substrate recognition and binding and mppB is the catalytic subunit. It depends on Zn(2+) as a cofactor.

Its subcellular location is the mitochondrion matrix. The enzyme catalyses Release of N-terminal transit peptides from precursor proteins imported into the mitochondrion, typically with Arg in position P2.. Binding to mppA is required for catalytic activity. In terms of biological role, catalytic subunit of the essential mitochondrial processing protease (MPP), which cleaves the mitochondrial sequence off newly imported precursors proteins. Preferentially, cleaves after an arginine at position P2. This chain is Mitochondrial-processing peptidase subunit beta (mppB), found in Lentinula edodes (Shiitake mushroom).